Here is a 205-residue protein sequence, read N- to C-terminus: Thiamine-phosphate synthase (205 aa).

4-amino-2-methyl-5-(diphosphooxymethyl)pyrimidine-binding positions include 37 to 41 (QVREK) and Asn-69. Residues Asp-70 and Asp-89 each contribute to the Mg(2+) site. Ser-108 is a binding site for 4-amino-2-methyl-5-(diphosphooxymethyl)pyrimidine. Residue 134 to 136 (TGS) participates in 2-[(2R,5Z)-2-carboxy-4-methylthiazol-5(2H)-ylidene]ethyl phosphate binding. Position 137 (Lys-137) interacts with 4-amino-2-methyl-5-(diphosphooxymethyl)pyrimidine. 2-[(2R,5Z)-2-carboxy-4-methylthiazol-5(2H)-ylidene]ethyl phosphate is bound by residues Gly-165 and 185–186 (IS).

Belongs to the thiamine-phosphate synthase family. The cofactor is Mg(2+).

It catalyses the reaction 2-[(2R,5Z)-2-carboxy-4-methylthiazol-5(2H)-ylidene]ethyl phosphate + 4-amino-2-methyl-5-(diphosphooxymethyl)pyrimidine + 2 H(+) = thiamine phosphate + CO2 + diphosphate. The catalysed reaction is 2-(2-carboxy-4-methylthiazol-5-yl)ethyl phosphate + 4-amino-2-methyl-5-(diphosphooxymethyl)pyrimidine + 2 H(+) = thiamine phosphate + CO2 + diphosphate. It carries out the reaction 4-methyl-5-(2-phosphooxyethyl)-thiazole + 4-amino-2-methyl-5-(diphosphooxymethyl)pyrimidine + H(+) = thiamine phosphate + diphosphate. The protein operates within cofactor biosynthesis; thiamine diphosphate biosynthesis; thiamine phosphate from 4-amino-2-methyl-5-diphosphomethylpyrimidine and 4-methyl-5-(2-phosphoethyl)-thiazole: step 1/1. Functionally, condenses 4-methyl-5-(beta-hydroxyethyl)thiazole monophosphate (THZ-P) and 2-methyl-4-amino-5-hydroxymethyl pyrimidine pyrophosphate (HMP-PP) to form thiamine monophosphate (TMP). This is Thiamine-phosphate synthase from Clostridium botulinum (strain Langeland / NCTC 10281 / Type F).